The sequence spans 156 residues: Small ribosomal subunit protein uS7 (156 aa).

The protein belongs to the universal ribosomal protein uS7 family. As to quaternary structure, part of the 30S ribosomal subunit. Contacts proteins S9 and S11.

Its function is as follows. One of the primary rRNA binding proteins, it binds directly to 16S rRNA where it nucleates assembly of the head domain of the 30S subunit. Is located at the subunit interface close to the decoding center, probably blocks exit of the E-site tRNA. The chain is Small ribosomal subunit protein uS7 from Vibrio campbellii (strain ATCC BAA-1116).